Reading from the N-terminus, the 131-residue chain is Major pollen allergen Pla l 1 (131 aa).

3 disulfides stabilise this stretch: cysteine 17/cysteine 86, cysteine 20/cysteine 131, and cysteine 42/cysteine 74. Histidine 21, aspartate 45, aspartate 73, and glutamate 88 together coordinate Zn(2+). Residue asparagine 107 is glycosylated (N-linked (GlcNAc...) asparagine).

It belongs to the Ole e I family. In terms of processing, exists in two variants: glycosylated and non-glycosylated. Carries a complex, major N-linked glycan, with a alpha-1,3-fucose residue in its structure and probably also a beta-1,2-xylose. The average modification of molecular mass due to glycosylation is approximately 969 Da.

It localises to the secreted. The sequence is that of Major pollen allergen Pla l 1 from Plantago lanceolata (English plantain).